The following is a 368-amino-acid chain: Probable dual-specificity RNA methyltransferase RlmN (368 aa).

The active-site Proton acceptor is the Glu100. One can recognise a Radical SAM core domain in the interval 106–344; the sequence is QHYGLSVCVT…CVVRQEHGTD (239 aa). A disulfide bridge links Cys113 with Cys349. Cys120, Cys124, and Cys127 together coordinate [4Fe-4S] cluster. Residues 172–173, Ser204, 227–229, and Asn305 each bind S-adenosyl-L-methionine; these read GE and SLH. The active-site S-methylcysteine intermediate is Cys349.

The protein belongs to the radical SAM superfamily. RlmN family. Requires [4Fe-4S] cluster as cofactor.

It is found in the cytoplasm. It catalyses the reaction adenosine(2503) in 23S rRNA + 2 reduced [2Fe-2S]-[ferredoxin] + 2 S-adenosyl-L-methionine = 2-methyladenosine(2503) in 23S rRNA + 5'-deoxyadenosine + L-methionine + 2 oxidized [2Fe-2S]-[ferredoxin] + S-adenosyl-L-homocysteine. The catalysed reaction is adenosine(37) in tRNA + 2 reduced [2Fe-2S]-[ferredoxin] + 2 S-adenosyl-L-methionine = 2-methyladenosine(37) in tRNA + 5'-deoxyadenosine + L-methionine + 2 oxidized [2Fe-2S]-[ferredoxin] + S-adenosyl-L-homocysteine. Specifically methylates position 2 of adenine 2503 in 23S rRNA and position 2 of adenine 37 in tRNAs. The sequence is that of Probable dual-specificity RNA methyltransferase RlmN from Streptococcus agalactiae serotype Ia (strain ATCC 27591 / A909 / CDC SS700).